A 91-amino-acid chain; its full sequence is ATP synthase subunit c (91 aa).

Helical transmembrane passes span 4–24 (LTMC…GTGI) and 53–73 (IGLA…LIIL).

It belongs to the ATPase C chain family. F-type ATPases have 2 components, F(1) - the catalytic core - and F(0) - the membrane proton channel. F(1) has five subunits: alpha(3), beta(3), gamma(1), delta(1), epsilon(1). F(0) has three main subunits: a(1), b(2) and c(10-14). The alpha and beta chains form an alternating ring which encloses part of the gamma chain. F(1) is attached to F(0) by a central stalk formed by the gamma and epsilon chains, while a peripheral stalk is formed by the delta and b chains.

It localises to the cell inner membrane. F(1)F(0) ATP synthase produces ATP from ADP in the presence of a proton or sodium gradient. F-type ATPases consist of two structural domains, F(1) containing the extramembraneous catalytic core and F(0) containing the membrane proton channel, linked together by a central stalk and a peripheral stalk. During catalysis, ATP synthesis in the catalytic domain of F(1) is coupled via a rotary mechanism of the central stalk subunits to proton translocation. Its function is as follows. Key component of the F(0) channel; it plays a direct role in translocation across the membrane. A homomeric c-ring of between 10-14 subunits forms the central stalk rotor element with the F(1) delta and epsilon subunits. This is ATP synthase subunit c from Geobacter metallireducens (strain ATCC 53774 / DSM 7210 / GS-15).